Consider the following 269-residue polypeptide: Glutamate racemase (269 aa).

Residues 14 to 15 and 46 to 47 each bind substrate; these read DS and YS. C78 functions as the Proton donor/acceptor in the catalytic mechanism. Substrate is bound at residue 79-80; sequence NT. Residue C189 is the Proton donor/acceptor of the active site. Residue 190–191 participates in substrate binding; the sequence is TH.

This sequence belongs to the aspartate/glutamate racemases family.

It catalyses the reaction L-glutamate = D-glutamate. It functions in the pathway cell wall biogenesis; peptidoglycan biosynthesis. Its function is as follows. Provides the (R)-glutamate required for cell wall biosynthesis. The protein is Glutamate racemase of Haemophilus influenzae (strain PittGG).